We begin with the raw amino-acid sequence, 487 residues long: Putative B3 domain-containing protein At1g78640 (487 aa).

2 DNA-binding regions (TF-B3) span residues 171 to 269 and 379 to 474; these read RLLL…QQGT and RLTL…LFRV.

It localises to the nucleus. The sequence is that of Putative B3 domain-containing protein At1g78640 from Arabidopsis thaliana (Mouse-ear cress).